Reading from the N-terminus, the 65-residue chain is Large ribosomal subunit protein bL35 (65 aa).

The tract at residues 1 to 51 (MPKIKTNRGAAKRFRKSASGRVKRGNAFTSHILTHKTRKNKRNLRGTSMVS) is disordered. 2 stretches are compositionally biased toward basic residues: residues 10 to 24 (AAKR…RVKR) and 33 to 44 (LTHKTRKNKRNL).

Belongs to the bacterial ribosomal protein bL35 family.

The polypeptide is Large ribosomal subunit protein bL35 (Pelobacter propionicus (strain DSM 2379 / NBRC 103807 / OttBd1)).